The chain runs to 208 residues: Uracil phosphoribosyltransferase (208 aa).

5-phospho-alpha-D-ribose 1-diphosphate-binding positions include Arg78, Arg103, and 130 to 138 (DPMLATGGS). Uracil contacts are provided by residues Ile193 and 198–200 (GDA). A 5-phospho-alpha-D-ribose 1-diphosphate-binding site is contributed by Asp199.

Belongs to the UPRTase family. Mg(2+) is required as a cofactor.

It carries out the reaction UMP + diphosphate = 5-phospho-alpha-D-ribose 1-diphosphate + uracil. It functions in the pathway pyrimidine metabolism; UMP biosynthesis via salvage pathway; UMP from uracil: step 1/1. With respect to regulation, allosterically activated by GTP. Functionally, catalyzes the conversion of uracil and 5-phospho-alpha-D-ribose 1-diphosphate (PRPP) to UMP and diphosphate. The polypeptide is Uracil phosphoribosyltransferase (Shewanella putrefaciens (strain CN-32 / ATCC BAA-453)).